A 99-amino-acid polypeptide reads, in one-letter code: (4S)-4-hydroxy-5-phosphonooxypentane-2,3-dione isomerase (99 aa).

The ABM domain occupies 2 to 91 (HVTLVEINVK…ISEPRKKRSF (90 aa)).

Belongs to the LsrG family. Homodimer.

It localises to the cytoplasm. The enzyme catalyses (2S)-2-hydroxy-3,4-dioxopentyl phosphate = 3-hydroxy-2,4-dioxopentyl phosphate. Functionally, involved in the degradation of phospho-AI-2, thereby terminating induction of the lsr operon and closing the AI-2 signaling cycle. Catalyzes the conversion of (4S)-4-hydroxy-5-phosphonooxypentane-2,3-dione (P-DPD) to 3-hydroxy-5-phosphonooxypentane-2,4-dione (P-HPD). This is (4S)-4-hydroxy-5-phosphonooxypentane-2,3-dione isomerase from Photorhabdus laumondii subsp. laumondii (strain DSM 15139 / CIP 105565 / TT01) (Photorhabdus luminescens subsp. laumondii).